The following is a 367-amino-acid chain: UDP-N-acetylenolpyruvoylglucosamine reductase 2 (367 aa).

The region spanning 31–198 (IGGKPRSAVR…LAIELQLLTD (168 aa)) is the FAD-binding PCMH-type domain. The active site involves arginine 176. The active-site Proton donor is serine 256. The active site involves glutamate 357.

This sequence belongs to the MurB family. FAD serves as cofactor.

The protein localises to the cytoplasm. The enzyme catalyses UDP-N-acetyl-alpha-D-muramate + NADP(+) = UDP-N-acetyl-3-O-(1-carboxyvinyl)-alpha-D-glucosamine + NADPH + H(+). Its pathway is cell wall biogenesis; peptidoglycan biosynthesis. Cell wall formation. The chain is UDP-N-acetylenolpyruvoylglucosamine reductase 2 (murB2) from Corynebacterium glutamicum (strain ATCC 13032 / DSM 20300 / JCM 1318 / BCRC 11384 / CCUG 27702 / LMG 3730 / NBRC 12168 / NCIMB 10025 / NRRL B-2784 / 534).